Here is a 114-residue protein sequence, read N- to C-terminus: Non-specific lipid-transfer protein 1 (114 aa).

An N-terminal signal peptide occupies residues 1 to 23 (MEIAGKIACFVVLCMVVAAPCAE). 4 disulfides stabilise this stretch: Cys-27–Cys-73, Cys-37–Cys-50, Cys-51–Cys-96, and Cys-71–Cys-110.

It belongs to the plant LTP family. As to expression, high expression in leaf epidermis and shoot apex, and also in root epidermis during seedling germination.

Its function is as follows. Plant non-specific lipid-transfer proteins transfer phospholipids as well as galactolipids across membranes. Binds cis-unsaturated fatty acids and jasmonic acid with a higher affinity than linear chain fatty acids. Formation of the complex with jasmonic acid results in a conformational change facilitating the LPT1 binding on the elicitin plasma membrane receptor that is known to be involved in plant defense induction. May also play a role in wax or cutin deposition in the cell walls of expanding epidermal cells and certain secretory tissues. The protein is Non-specific lipid-transfer protein 1 (LTP1) of Nicotiana tabacum (Common tobacco).